A 317-amino-acid polypeptide reads, in one-letter code: Brain-specific serine protease 4 (317 aa).

Positions 1-32 (MVVSGAPPALGGGCLGTFTSLLLLASTAILNA) are cleaved as a signal peptide. Positions 50-290 (VVGGEDSTDS…HRSWVEKIVQ (241 aa)) constitute a Peptidase S1 domain. N70 carries an N-linked (GlcNAc...) asparagine glycan. Cysteines 75 and 91 form a disulfide. Active-site charge relay system residues include H90 and D141. 3 disulfides stabilise this stretch: C175–C248, C208–C227, and C238–C266. The Charge relay system role is filled by S242.

This sequence belongs to the peptidase S1 family. As to expression, expressed abundantly in the epithelial cells of the airways, including trachea, esophagus and fetal lung. Scarce in adult lung. Expressed at low levels in placenta, pancreas, prostate and thyroid gland.

The protein localises to the secreted. In terms of biological role, preferentially cleaves the synthetic substrate H-D-Leu-Thr-Arg-pNA compared to tosyl-Gly-Pro-Arg-pNA. The sequence is that of Brain-specific serine protease 4 (PRSS22) from Homo sapiens (Human).